Here is a 275-residue protein sequence, read N- to C-terminus: F-box only protein 50 (275 aa).

The disordered stretch occupies residues 1-67 (MEEVREGHAL…LPEPAQPSEA (67 aa)). A compositionally biased stretch (pro residues) spans 26–62 (PPSPRSPSPPPSPPPLPSPPSLPSPAAPEAPELPEPA). Phosphoserine occurs at positions 31, 37, and 49. The FBA domain maps to 95–273 (LLLRRPLYRN…VTDSSVSVQL (179 aa)).

As to expression, expressed in the esophagus, oral cavity, skin, tongue and reproductive organs.

It localises to the cytoplasm. Promotes cell proliferation. The protein is F-box only protein 50 (NCCRP1) of Homo sapiens (Human).